Here is a 114-residue protein sequence, read N- to C-terminus: Ig heavy chain V region GOM (114 aa).

One can recognise an Ig-like domain in the interval 1 to 112 (EVQLVESGGD…YWGQGTLVTV (112 aa)).

The protein is Ig heavy chain V region GOM of Canis lupus familiaris (Dog).